A 325-amino-acid polypeptide reads, in one-letter code: Germination protease (325 aa).

A propeptide spanning residues 1–7 (MYNVRTD) is cleaved from the precursor.

It belongs to the peptidase A25 family. Homotetramer. Post-translationally, autoproteolytically processed. The inactive tetrameric zymogen termed p46 autoprocesses to a smaller form termed p41, which is active only during spore germination.

The enzyme catalyses Endopeptidase action with P4 Glu or Asp, P1 preferably Glu &gt; Asp, P1' hydrophobic and P2' Ala.. Initiates the rapid degradation of small, acid-soluble proteins during spore germination. In Clostridium perfringens (strain SM101 / Type A), this protein is Germination protease.